A 718-amino-acid chain; its full sequence is Fatty acid oxidation complex subunit alpha (718 aa).

The segment at 1-188 is enoyl-CoA hydratase/isomerase; sequence MIYQGESIRV…KVGAVDAVVE (188 aa). Aspartate 295 is a substrate binding site. Residues 310-718 are 3-hydroxyacyl-CoA dehydrogenase; it reads TKEIKTAGVL…KSYFDTTSAK (409 aa). Residues methionine 324, aspartate 343, 400–402, lysine 407, and serine 429 contribute to the NAD(+) site; that span reads VVE. The For 3-hydroxyacyl-CoA dehydrogenase activity role is filled by histidine 450. An NAD(+)-binding site is contributed by asparagine 453. Substrate-binding residues include asparagine 500 and tyrosine 658.

In the N-terminal section; belongs to the enoyl-CoA hydratase/isomerase family. The protein in the C-terminal section; belongs to the 3-hydroxyacyl-CoA dehydrogenase family. As to quaternary structure, heterotetramer of two alpha chains (FadB) and two beta chains (FadA).

The enzyme catalyses a (3S)-3-hydroxyacyl-CoA + NAD(+) = a 3-oxoacyl-CoA + NADH + H(+). The catalysed reaction is a (3S)-3-hydroxyacyl-CoA = a (2E)-enoyl-CoA + H2O. It catalyses the reaction a 4-saturated-(3S)-3-hydroxyacyl-CoA = a (3E)-enoyl-CoA + H2O. It carries out the reaction (3S)-3-hydroxybutanoyl-CoA = (3R)-3-hydroxybutanoyl-CoA. The enzyme catalyses a (3Z)-enoyl-CoA = a 4-saturated (2E)-enoyl-CoA. The catalysed reaction is a (3E)-enoyl-CoA = a 4-saturated (2E)-enoyl-CoA. It participates in lipid metabolism; fatty acid beta-oxidation. Involved in the aerobic and anaerobic degradation of long-chain fatty acids via beta-oxidation cycle. Catalyzes the formation of 3-oxoacyl-CoA from enoyl-CoA via L-3-hydroxyacyl-CoA. It can also use D-3-hydroxyacyl-CoA and cis-3-enoyl-CoA as substrate. The protein is Fatty acid oxidation complex subunit alpha of Idiomarina loihiensis (strain ATCC BAA-735 / DSM 15497 / L2-TR).